We begin with the raw amino-acid sequence, 324 residues long: Protein SRC2 homolog (324 aa).

A C2 domain is found at 1–111; the sequence is MECRSLDLTI…LDQNKGDEEK (111 aa). Over 1–279 the chain is Cytoplasmic; it reads MECRSLDLTI…KPQKPKKHGK (279 aa). Positions 141–281 are disordered; sequence GSSSGPHAPV…QKPKKHGKAG (141 aa). 2 stretches are compositionally biased toward low complexity: residues 166 to 175 and 246 to 269; these read YPPGHGAPSA and PYGY…QAHG. Over residues 270-279 the composition is skewed to basic residues; sequence KPQKPKKHGK. The chain crosses the membrane as a helical; Signal-anchor span at residues 280–300; that stretch reads AGAGMGLGLGLGAGLLGGLLV. The Lumenal portion of the chain corresponds to 301 to 324; sequence GEAVSDIADMGDMGDMGDMGGFDF.

Interacts with RBOHF (via N-terminus).

It localises to the endoplasmic reticulum membrane. It is found in the protein storage vacuole membrane. Its subcellular location is the cell membrane. May act as an activator of the calcium-dependent activation of RBOHF that mediates reactive oxygen species (ROS) production and may play a role in cold responses. The sequence is that of Protein SRC2 homolog from Arabidopsis thaliana (Mouse-ear cress).